A 263-amino-acid chain; its full sequence is Hydroxyethylthiazole kinase (263 aa).

M41 contacts substrate. Positions 117 and 163 each coordinate ATP. A190 is a binding site for substrate.

This sequence belongs to the Thz kinase family. The cofactor is Mg(2+).

The enzyme catalyses 5-(2-hydroxyethyl)-4-methylthiazole + ATP = 4-methyl-5-(2-phosphooxyethyl)-thiazole + ADP + H(+). It participates in cofactor biosynthesis; thiamine diphosphate biosynthesis; 4-methyl-5-(2-phosphoethyl)-thiazole from 5-(2-hydroxyethyl)-4-methylthiazole: step 1/1. Functionally, catalyzes the phosphorylation of the hydroxyl group of 4-methyl-5-beta-hydroxyethylthiazole (THZ). This Haemophilus influenzae (strain PittEE) protein is Hydroxyethylthiazole kinase.